We begin with the raw amino-acid sequence, 546 residues long: MATTQVEIQRPIANFSPSLWGDQFIKNDSGAKAAEKHCKAVEELKKEVMNMITAGGSNLVEAMNLIDTLERLGISYHFEKEIDQKLNHFFNLNTDYSDEFYDLYTVSLHFRLFRQHGHRISSDIFGRWIDESGKFKEGLKTDGKGLLSLYEASYLRTRGETILDDALEFATATLNSIAPHLESPLSKQVVHALIQPLHYGNPRIEAHNFISIYEENQDKNEFLLKFAKLDYNLLQMLHKEELHEVSRWWKELDLVSKLPYARDRVVECFFWAMGVYHEPQYSRARIMLTKTITMTSIIDDTYDAYGVIEELDIFTEAIERWNIEEMDRLPEYVKPFYKALLELYEQFEEELAEEGRSYAAHYAIESLKELVRSYHVEAKWFIQGYLPPFEEYLKNALITCTYCYHTTTSLLGVESAVEEDFQWLAKKPKMLVAGLLICRVIDDIATYEVEKERGQSATGIESYMRDNNATIEEAVAKFFEIATDAWKDINEECLMPSPYSRDVLMRILNLERIIDVTYKGNEDGYTQPEKVLKPHIIALFVDPIKM.

5 residues coordinate Mg(2+): Asp-299, Asp-303, Asp-442, Thr-446, and Glu-450. The DDXXD motif signature appears at 299–303 (DDTYD).

It belongs to the terpene synthase family. Tpsa subfamily. As to quaternary structure, monomer. Mg(2+) serves as cofactor. In terms of tissue distribution, highly expressed in leaves. Expressed at levels in flowers.

The catalysed reaction is (2E,6E)-farnesyl diphosphate = (-)-5-epi-eremophilene + diphosphate. It participates in secondary metabolite biosynthesis; terpenoid biosynthesis. In terms of biological role, sesquiterpene synthase that catalyzes the conversion of farnesyl diphosphate to (-)-5-epi-eremophilene. The chain is (-)-5-epieremophilene synthase STPS2 from Salvia miltiorrhiza (Chinese sage).